The following is a 151-amino-acid chain: Large ribosomal subunit protein uL15 (151 aa).

The interval 1-62 (MVKLNELFPK…GGQMPLYRRV (62 aa)) is disordered. Basic residues predominate over residues 11-20 (HGSRKAKRRI).

This sequence belongs to the universal ribosomal protein uL15 family. Part of the 50S ribosomal subunit.

Functionally, binds to the 23S rRNA. This chain is Large ribosomal subunit protein uL15, found in Elusimicrobium minutum (strain Pei191).